The sequence spans 385 residues: Queuine tRNA-ribosyltransferase (385 aa).

Asp93 (proton acceptor) is an active-site residue. Residues 93-97 (DSGGF), Asp147, Gln191, and Gly218 contribute to the substrate site. An RNA binding region spans residues 249–255 (GVGKPED). Catalysis depends on Asp268, which acts as the Nucleophile. An RNA binding; important for wobble base 34 recognition region spans residues 273 to 277 (TRNAR). 4 residues coordinate Zn(2+): Cys306, Cys308, Cys311, and His337.

This sequence belongs to the queuine tRNA-ribosyltransferase family. Homodimer. Within each dimer, one monomer is responsible for RNA recognition and catalysis, while the other monomer binds to the replacement base PreQ1. It depends on Zn(2+) as a cofactor.

The catalysed reaction is 7-aminomethyl-7-carbaguanine + guanosine(34) in tRNA = 7-aminomethyl-7-carbaguanosine(34) in tRNA + guanine. It participates in tRNA modification; tRNA-queuosine biosynthesis. Functionally, catalyzes the base-exchange of a guanine (G) residue with the queuine precursor 7-aminomethyl-7-deazaguanine (PreQ1) at position 34 (anticodon wobble position) in tRNAs with GU(N) anticodons (tRNA-Asp, -Asn, -His and -Tyr). Catalysis occurs through a double-displacement mechanism. The nucleophile active site attacks the C1' of nucleotide 34 to detach the guanine base from the RNA, forming a covalent enzyme-RNA intermediate. The proton acceptor active site deprotonates the incoming PreQ1, allowing a nucleophilic attack on the C1' of the ribose to form the product. After dissociation, two additional enzymatic reactions on the tRNA convert PreQ1 to queuine (Q), resulting in the hypermodified nucleoside queuosine (7-(((4,5-cis-dihydroxy-2-cyclopenten-1-yl)amino)methyl)-7-deazaguanosine). This chain is Queuine tRNA-ribosyltransferase, found in Pasteurella multocida (strain Pm70).